The chain runs to 897 residues: Major intrinsically disordered Notch2-binding receptor 1 (897 aa).

The Cytoplasmic portion of the chain corresponds to 1-872; sequence MDAMPEYSLF…AEFRRAKACK (872 aa). Disordered regions lie at residues 405–433, 450–502, and 688–766; these read AKDK…SVAC, SINC…EDSE, and TRRS…PPKD. Composition is skewed to polar residues over residues 411–423 and 452–471; these read ASPS…SNGS and NCPS…GTQT. Positions 472-498 are enriched in basic and acidic residues; that stretch reads EQHESRKVKDYPSQNKFKERPPFKHSE. Residues 697 to 724 show a composition bias toward polar residues; it reads EENSATESKVASITNSPRDWRTVSYSSH. The span at 725-756 shows a compositional bias: basic and acidic residues; it reads NGEEGKERDRHSEGKERHRKSREAERQYEAHQ. The chain crosses the membrane as a helical span at residues 873-893; the sequence is IGALIFAAACTVILVIVVPIC. Topologically, residues 894–897 are extracellular; that stretch reads TMKS.

This sequence belongs to the MINAR family.

The protein localises to the cell membrane. Its function is as follows. Intrinsically disordered protein which may negatively regulate mTOR signaling pathway by stabilizing the mTOR complex component DEPTOR. Negatively regulates angiogenesis. Negatively regulates cell growth. May play a role in neuronal development. The sequence is that of Major intrinsically disordered Notch2-binding receptor 1 (minar1) from Danio rerio (Zebrafish).